Consider the following 889-residue polypeptide: Valine--tRNA ligase (889 aa).

Positions 50-60 match the 'HIGH' region motif; that stretch reads PNVTGKLHLGH. The 'KMSKS' region signature appears at 532–536; it reads KMSKS. Lys535 contacts ATP. Residues 816–889 are a coiled coil; that stretch reads LAELVDLDEE…QRLVDIKAEA (74 aa).

Belongs to the class-I aminoacyl-tRNA synthetase family. ValS type 1 subfamily. Monomer.

The protein resides in the cytoplasm. The catalysed reaction is tRNA(Val) + L-valine + ATP = L-valyl-tRNA(Val) + AMP + diphosphate. Functionally, catalyzes the attachment of valine to tRNA(Val). As ValRS can inadvertently accommodate and process structurally similar amino acids such as threonine, to avoid such errors, it has a 'posttransfer' editing activity that hydrolyzes mischarged Thr-tRNA(Val) in a tRNA-dependent manner. The polypeptide is Valine--tRNA ligase (Lactiplantibacillus plantarum (strain ATCC BAA-793 / NCIMB 8826 / WCFS1) (Lactobacillus plantarum)).